We begin with the raw amino-acid sequence, 104 residues long: NADH-quinone oxidoreductase subunit K (104 aa).

Helical transmembrane passes span 7 to 27 (LSHY…GIFL), 33 to 53 (IVIL…LVSF), and 67 to 87 (LLVL…LVVF).

The protein belongs to the complex I subunit 4L family. NDH-1 is composed of 14 different subunits. Subunits NuoA, H, J, K, L, M, N constitute the membrane sector of the complex.

The protein resides in the cell inner membrane. The catalysed reaction is a quinone + NADH + 5 H(+)(in) = a quinol + NAD(+) + 4 H(+)(out). Functionally, NDH-1 shuttles electrons from NADH, via FMN and iron-sulfur (Fe-S) centers, to quinones in the respiratory chain. The immediate electron acceptor for the enzyme in this species is believed to be ubiquinone. Couples the redox reaction to proton translocation (for every two electrons transferred, four hydrogen ions are translocated across the cytoplasmic membrane), and thus conserves the redox energy in a proton gradient. The sequence is that of NADH-quinone oxidoreductase subunit K from Xanthobacter autotrophicus (strain ATCC BAA-1158 / Py2).